The chain runs to 279 residues: Large ribosomal subunit protein uL2 (279 aa).

Residues 223 to 279 (PVAMNPVDHPMGGGEGRASGGHPRSRKGLPAKGFKTRSRTKASNKYIVERRKTRKKK) form a disordered region. Over residues 245 to 264 (PRSRKGLPAKGFKTRSRTKA) the composition is skewed to basic residues.

It belongs to the universal ribosomal protein uL2 family. Part of the 50S ribosomal subunit. Forms a bridge to the 30S subunit in the 70S ribosome.

In terms of biological role, one of the primary rRNA binding proteins. Required for association of the 30S and 50S subunits to form the 70S ribosome, for tRNA binding and peptide bond formation. It has been suggested to have peptidyltransferase activity; this is somewhat controversial. Makes several contacts with the 16S rRNA in the 70S ribosome. This is Large ribosomal subunit protein uL2 from Christiangramia forsetii (strain DSM 17595 / CGMCC 1.15422 / KT0803) (Gramella forsetii).